The chain runs to 287 residues: Protease HtpX (287 aa).

2 helical membrane-spanning segments follow: residues 4–24 (VFLLIATNLAILLVASIVMSI) and 33–53 (GGLLVFAAIFGFGGSFISLAI). Position 139 (H139) interacts with Zn(2+). Residue E140 is part of the active site. Residue H143 participates in Zn(2+) binding. A run of 2 helical transmembrane segments spans residues 154-174 (LIQGVVNTFVIFAARVVAGII) and 195-215 (GVVFVLDMLFGILASIIVAYF). E220 is a Zn(2+) binding site.

It belongs to the peptidase M48B family. It depends on Zn(2+) as a cofactor.

The protein localises to the cell inner membrane. This chain is Protease HtpX, found in Shewanella denitrificans (strain OS217 / ATCC BAA-1090 / DSM 15013).